We begin with the raw amino-acid sequence, 372 residues long: Dual-specificity RNA methyltransferase RlmN (372 aa).

The active-site Proton acceptor is the glutamate 93. In terms of domain architecture, Radical SAM core spans 99 to 338 (EKDRATLCIS…VTVRKTRGDD (240 aa)). A disulfide bridge connects residues cysteine 106 and cysteine 343. Residues cysteine 113, cysteine 117, and cysteine 120 each contribute to the [4Fe-4S] cluster site. S-adenosyl-L-methionine contacts are provided by residues 167-168 (GE), serine 199, 221-223 (SLH), and asparagine 300. The S-methylcysteine intermediate role is filled by cysteine 343.

The protein belongs to the radical SAM superfamily. RlmN family. [4Fe-4S] cluster serves as cofactor.

The protein resides in the cytoplasm. It carries out the reaction adenosine(2503) in 23S rRNA + 2 reduced [2Fe-2S]-[ferredoxin] + 2 S-adenosyl-L-methionine = 2-methyladenosine(2503) in 23S rRNA + 5'-deoxyadenosine + L-methionine + 2 oxidized [2Fe-2S]-[ferredoxin] + S-adenosyl-L-homocysteine. It catalyses the reaction adenosine(37) in tRNA + 2 reduced [2Fe-2S]-[ferredoxin] + 2 S-adenosyl-L-methionine = 2-methyladenosine(37) in tRNA + 5'-deoxyadenosine + L-methionine + 2 oxidized [2Fe-2S]-[ferredoxin] + S-adenosyl-L-homocysteine. Its function is as follows. Specifically methylates position 2 of adenine 2503 in 23S rRNA and position 2 of adenine 37 in tRNAs. m2A2503 modification seems to play a crucial role in the proofreading step occurring at the peptidyl transferase center and thus would serve to optimize ribosomal fidelity. The protein is Dual-specificity RNA methyltransferase RlmN of Psychromonas ingrahamii (strain DSM 17664 / CCUG 51855 / 37).